Reading from the N-terminus, the 600-residue chain is Aspartate--tRNA(Asp/Asn) ligase (600 aa).

Glutamate 174 provides a ligand contact to L-aspartate. Residues 198–201 (QLFK) form an aspartate region. L-aspartate is bound at residue arginine 220. Residues 220–222 (RDE) and glutamine 229 each bind ATP. Residue histidine 457 coordinates L-aspartate. Residue glutamate 491 coordinates ATP. Arginine 498 is a binding site for L-aspartate. 543–546 (GLDR) is an ATP binding site.

Belongs to the class-II aminoacyl-tRNA synthetase family. Type 1 subfamily. Homodimer.

It localises to the cytoplasm. The catalysed reaction is tRNA(Asx) + L-aspartate + ATP = L-aspartyl-tRNA(Asx) + AMP + diphosphate. In terms of biological role, aspartyl-tRNA synthetase with relaxed tRNA specificity since it is able to aspartylate not only its cognate tRNA(Asp) but also tRNA(Asn). Reaction proceeds in two steps: L-aspartate is first activated by ATP to form Asp-AMP and then transferred to the acceptor end of tRNA(Asp/Asn). The polypeptide is Aspartate--tRNA(Asp/Asn) ligase (Burkholderia vietnamiensis (strain G4 / LMG 22486) (Burkholderia cepacia (strain R1808))).